We begin with the raw amino-acid sequence, 82 residues long: Exodeoxyribonuclease 7 small subunit (82 aa).

The protein belongs to the XseB family. Heterooligomer composed of large and small subunits.

The protein resides in the cytoplasm. The enzyme catalyses Exonucleolytic cleavage in either 5'- to 3'- or 3'- to 5'-direction to yield nucleoside 5'-phosphates.. Functionally, bidirectionally degrades single-stranded DNA into large acid-insoluble oligonucleotides, which are then degraded further into small acid-soluble oligonucleotides. This chain is Exodeoxyribonuclease 7 small subunit, found in Coxiella burnetii (strain CbuG_Q212) (Coxiella burnetii (strain Q212)).